Consider the following 176-residue polypeptide: Beta-carotene hydroxylase (176 aa).

Positions 10–126 (LSVIAMEGIA…AHRLHHAVRG (117 aa)) constitute a Fatty acid hydroxylase domain. Positions 152–176 (HGRPPKRDAAKDRPDAASPSSSSPE) are disordered. A compositionally biased stretch (basic and acidic residues) spans 156–166 (PKRDAAKDRPD). Residues 167–176 (AASPSSSSPE) are compositionally biased toward low complexity.

The protein belongs to the sterol desaturase family.

It functions in the pathway carotenoid biosynthesis; zeaxanthin biosynthesis. Catalyzes the hydroxylation reaction from beta-carotene to zeaxanthin. This chain is Beta-carotene hydroxylase (crtZ), found in Pseudescherichia vulneris (Escherichia vulneris).